The chain runs to 132 residues: Thioredoxin H4-2 (132 aa).

A Thioredoxin domain is found at 18–130 (DFKGGNVHVI…LEKKVQALAD (113 aa)). Catalysis depends on nucleophile residues Cys-56 and Cys-59. A disulfide bond links Cys-56 and Cys-59.

This sequence belongs to the thioredoxin family. Plant H-type subfamily.

The protein localises to the cytoplasm. Functionally, probable thiol-disulfide oxidoreductase that may be involved in the redox regulation of a number of cytosolic enzymes. The protein is Thioredoxin H4-2 of Oryza sativa subsp. japonica (Rice).